The chain runs to 326 residues: Protein-arginine N-acetylglucosaminyltransferase NleB2 (326 aa).

Residues 45–47 (QWF), Y69, and 216–219 (YLDM) contribute to the UDP-N-acetyl-alpha-D-glucosamine site. A DXD motif motif is present at residues 218–220 (DMD). Residue D220 coordinates Mn(2+). E250 (proton acceptor) is an active-site residue. Residues N317 and S319 each contribute to the Mn(2+) site. UDP-N-acetyl-alpha-D-glucosamine is bound by residues S319 and 324 to 326 (SSW).

It belongs to the glycosyltransferase NleB family. Mn(2+) serves as cofactor.

The protein resides in the secreted. It is found in the host cell. The enzyme catalyses L-arginyl-[protein] + UDP-N-acetyl-alpha-D-glucosamine = N(omega)-(N-acetyl-beta-D-glucosaminyl)-L-arginyl-[protein] + UDP + H(+). In terms of biological role, protein-arginine N-acetylglucosaminyltransferase effector that catalyzes the transfer of a single N-acetylglucosamine (GlcNAc) to a conserved arginine residue of host target proteins. In contrast to NleB1, not able to disrupt TNF signaling in infected cells. Shows a lower enzymatic activity than NleB1. The polypeptide is Protein-arginine N-acetylglucosaminyltransferase NleB2 (Escherichia coli O127:H6 (strain E2348/69 / EPEC)).